Here is a 460-residue protein sequence, read N- to C-terminus: Cysteine--tRNA ligase (460 aa).

Residue Cys28 participates in Zn(2+) binding. Residues 30 to 40 (MTVYDYCHLGH) carry the 'HIGH' region motif. Residues Cys209, His234, and Glu238 each coordinate Zn(2+). Residues 266–270 (KMSKS) carry the 'KMSKS' region motif. Lys269 is an ATP binding site.

It belongs to the class-I aminoacyl-tRNA synthetase family. Monomer. The cofactor is Zn(2+).

The protein resides in the cytoplasm. The catalysed reaction is tRNA(Cys) + L-cysteine + ATP = L-cysteinyl-tRNA(Cys) + AMP + diphosphate. The polypeptide is Cysteine--tRNA ligase (Pseudomonas aeruginosa (strain LESB58)).